We begin with the raw amino-acid sequence, 110 residues long: Prothymosin alpha (110 aa).

An N-acetylmethionine modification is found at Met1. Residues 1–110 (MSDAAVDTSS…TKKQKTDEDD (110 aa)) are disordered. Position 2 is an N-acetylserine; in Prothymosin alpha, N-terminally processed (Ser2). A Phosphoserine modification is found at Ser2. Phosphothreonine; by CK2 is present on Thr8. Ser9 and Ser10 each carry phosphoserine. 2 positions are modified to phosphothreonine; by CK2: Thr13 and Thr14. Residues 13-31 (TTKDLKEKKEVVEEAENGR) are compositionally biased toward basic and acidic residues. At Lys15 the chain carries N6-acetyllysine; alternate. Position 15 is an N6-succinyllysine; alternate (Lys15). Residues 32–41 (EAPANGNANE) are compositionally biased toward low complexity. Over residues 42–83 (ENGEQEADNEVDEEEEEGGEEEEEEEEGDGEEEDGDEDEEAE) the composition is skewed to acidic residues. Positions 100 to 110 (DTKKQKTDEDD) are enriched in basic and acidic residues. Thr101 bears the Phosphothreonine mark. N6-acetyllysine; alternate is present on Lys102. Lys102 participates in a covalent cross-link: Glycyl lysine isopeptide (Lys-Gly) (interchain with G-Cter in SUMO2); alternate. The residue at position 106 (Thr106) is a Phosphothreonine.

The protein belongs to the pro/parathymosin family. Interacts with NUPR1; regulates apoptotic process. Covalently linked to a small RNA of about 20 nucleotides.

It is found in the nucleus. Prothymosin alpha may mediate immune function by conferring resistance to certain opportunistic infections. The chain is Prothymosin alpha (PTMA) from Bos taurus (Bovine).